Reading from the N-terminus, the 347-residue chain is MIYPVIWQNNCVLLIDQTRLPNEYAVVEIHRSEDMARAIQTMIVRGAPAIGVAAAYGMYLGAREIETGERQEFLQELEKVAQLLRATRPTAVNLFWAISRMQKTAYKTLGTVAQIKENLLQTAQAINAEDLQTCQAIGDNGLAILPKTPEKLTLLTHCNAGALATAGYGTALGVVRSAWREGRLERLFADETRPRLQGAKLTTWECVQEGIPVTLITDNMAAHCMKQGLIHAVVVGADRIAANGDAANKIGTYSLAIVAKAHNVPFFVAAPVSTIDFELADGSQIPIEERNPVEIYQVGDTTLTPPGVKFYNPAFDVTPAELITAIITENGAFAPHVLTKSSQQAVV.

Substrate contacts are provided by residues 45–47 (RGA), Arg-88, and Gln-197. Asp-238 (proton donor) is an active-site residue. 248–249 (NK) is a binding site for substrate.

The protein belongs to the eIF-2B alpha/beta/delta subunits family. MtnA subfamily.

It carries out the reaction 5-(methylsulfanyl)-alpha-D-ribose 1-phosphate = 5-(methylsulfanyl)-D-ribulose 1-phosphate. It functions in the pathway amino-acid biosynthesis; L-methionine biosynthesis via salvage pathway; L-methionine from S-methyl-5-thio-alpha-D-ribose 1-phosphate: step 1/6. Its function is as follows. Catalyzes the interconversion of methylthioribose-1-phosphate (MTR-1-P) into methylthioribulose-1-phosphate (MTRu-1-P). This is Methylthioribose-1-phosphate isomerase from Nostoc sp. (strain PCC 7120 / SAG 25.82 / UTEX 2576).